Consider the following 474-residue polypeptide: Cobyric acid synthase (474 aa).

The region spanning 251 to 431 (TGFVAIPRLP…LHGLLENSAY (181 aa)) is the GATase cobBQ-type domain. C328 serves as the catalytic Nucleophile. Residue H423 is part of the active site.

It belongs to the CobB/CobQ family. CobQ subfamily.

Its pathway is cofactor biosynthesis; adenosylcobalamin biosynthesis. In terms of biological role, catalyzes amidations at positions B, D, E, and G on adenosylcobyrinic A,C-diamide. NH(2) groups are provided by glutamine, and one molecule of ATP is hydrogenolyzed for each amidation. The protein is Cobyric acid synthase of Deinococcus radiodurans (strain ATCC 13939 / DSM 20539 / JCM 16871 / CCUG 27074 / LMG 4051 / NBRC 15346 / NCIMB 9279 / VKM B-1422 / R1).